A 426-amino-acid polypeptide reads, in one-letter code: Ankyrin repeat-containing protein BDA1 (426 aa).

6 ANK repeats span residues 1 to 29 (MDSKLLLVTQSGSVDDLYSLIQAAPDILQ), 36 to 65 (IIHTPLHEASSAGKLDLAMELMILKPSFAK), 70 to 99 (YGLSPLHLAVENDQVELALELVKVDPSLVR), 104 to 134 (GGMTPLHLVAKKGDVDLLTDFLLACPESIKD), 138 to 167 (NGETILHITIMNDKYEQLKVLTGWMQKMRD), and 182 to 212 (GGNTVLHLAAYENNDKVVKQLVKCLSLDRNI). The next 4 membrane-spanning stretches (helical) occupy residues 288-308 (ALLVIAALIISATFQTAAQLL), 329-349 (WGCNTVAFSIAILFSFILLPV), 355-375 (WWYFIITVPLVFSYFLLMYMM), and 380-400 (FFFLIIYEGGLFLVYLLVLYV).

It is found in the cell membrane. Its function is as follows. Involved in plant defense. Required for basal resistance against Pseudomonas syringae pv. tomato DC3000. Required for resistance against nonpathogenic bacteria. May be involved in signaling components that function downstream of SNC2 and upstream of NPR1 and WRKY70 to regulate defense responses. The sequence is that of Ankyrin repeat-containing protein BDA1 from Arabidopsis thaliana (Mouse-ear cress).